The sequence spans 214 residues: Thymidylate kinase (214 aa).

Gly-15 to Thr-22 is an ATP binding site.

It belongs to the thymidylate kinase family.

The enzyme catalyses dTMP + ATP = dTDP + ADP. Its function is as follows. Phosphorylation of dTMP to form dTDP in both de novo and salvage pathways of dTTP synthesis. This is Thymidylate kinase from Haemophilus ducreyi (strain 35000HP / ATCC 700724).